The following is a 97-amino-acid chain: UPF0416 protein RC0826 (97 aa).

The signal sequence occupies residues 1-33; sequence MRIFVKAAISTAAWRFYAHPTVAMGICVGTALA.

This sequence belongs to the UPF0416 family.

In Rickettsia conorii (strain ATCC VR-613 / Malish 7), this protein is UPF0416 protein RC0826.